Reading from the N-terminus, the 289-residue chain is Zinc finger matrin-type protein 3 (289 aa).

Residues 1-42 form a disordered region; it reads MILLQHAVLPPPKQPSPSPPMSVATRSTGTLQLPPQKPFGQE. Over residues 9–20 the composition is skewed to pro residues; that stretch reads LPPPKQPSPSPP. The segment covering 24–33 has biased composition (polar residues); that stretch reads ATRSTGTLQL. Matrin-type zinc fingers lie at residues 70-100 and 147-177; these read LYCKLCNVTLNSAQQAQAHYQGKNHGKKLRN and DYCKLCDASFSSPAVAQAHYQGKNHAKRLRL. Over residues 180-191 the composition is skewed to polar residues; the sequence is AQSNSFSESSEL. Positions 180–201 are disordered; the sequence is AQSNSFSESSELGQRRARKEGN. The Matrin-type 3 zinc-finger motif lies at 246–276; sequence FYCSMCNVGAGEEMEFRQHLESKQHKSKVSE.

Interacts with dsRNA. In terms of tissue distribution, highly expressed in adult brain, and moderately in adult kidney and testis. Not detected in fetal brain, heart, pancreas, adrenal gland, liver or small intestine.

The protein resides in the nucleus. The protein localises to the nucleolus. Acts as a bona fide target gene of p53/TP53. May play a role in the TP53-dependent growth regulatory pathway. May contribute to TP53-mediated apoptosis by regulation of TP53 expression and translocation to the nucleus and nucleolus. The polypeptide is Zinc finger matrin-type protein 3 (Homo sapiens (Human)).